Consider the following 713-residue polypeptide: Glycine--tRNA ligase beta subunit (713 aa).

Belongs to the class-II aminoacyl-tRNA synthetase family. In terms of assembly, tetramer of two alpha and two beta subunits.

It is found in the cytoplasm. The catalysed reaction is tRNA(Gly) + glycine + ATP = glycyl-tRNA(Gly) + AMP + diphosphate. The polypeptide is Glycine--tRNA ligase beta subunit (Picosynechococcus sp. (strain ATCC 27264 / PCC 7002 / PR-6) (Agmenellum quadruplicatum)).